The following is a 276-amino-acid chain: Ribosomal RNA small subunit methyltransferase A (276 aa).

S-adenosyl-L-methionine contacts are provided by Asn24, Leu26, Gly51, Glu72, Asp97, and Asn118.

This sequence belongs to the class I-like SAM-binding methyltransferase superfamily. rRNA adenine N(6)-methyltransferase family. RsmA subfamily.

It localises to the cytoplasm. The enzyme catalyses adenosine(1518)/adenosine(1519) in 16S rRNA + 4 S-adenosyl-L-methionine = N(6)-dimethyladenosine(1518)/N(6)-dimethyladenosine(1519) in 16S rRNA + 4 S-adenosyl-L-homocysteine + 4 H(+). Its function is as follows. Specifically dimethylates two adjacent adenosines (A1518 and A1519) in the loop of a conserved hairpin near the 3'-end of 16S rRNA in the 30S particle. May play a critical role in biogenesis of 30S subunits. This is Ribosomal RNA small subunit methyltransferase A from Clostridium acetobutylicum (strain ATCC 824 / DSM 792 / JCM 1419 / IAM 19013 / LMG 5710 / NBRC 13948 / NRRL B-527 / VKM B-1787 / 2291 / W).